The chain runs to 909 residues: Aconitate hydratase A (909 aa).

[4Fe-4S] cluster-binding residues include C450, C516, and C519.

This sequence belongs to the aconitase/IPM isomerase family. As to quaternary structure, monomer. Requires [4Fe-4S] cluster as cofactor.

It carries out the reaction citrate = D-threo-isocitrate. It catalyses the reaction 3-hydroxybutane-1,2,3-tricarboxylate = 2-methyl-cis-aconitate + H2O. It functions in the pathway carbohydrate metabolism; tricarboxylic acid cycle; isocitrate from oxaloacetate: step 2/2. Functionally, involved in both the tricarboxylic acid (TCA) and methylcitric acid cycles. Catalyzes the reversible isomerization of citrate to isocitrate via cis-aconitate. Also catalyzes the rehydration of 2-methyl-cis-aconitate to produce 2-methylisocitrate. The apo form of AcnA functions as a RNA-binding regulatory protein which plays a role in the regulation of citrate concentration and in the sporulation. To prevent the accumulation of excessive levels of citrate, it binds near the 5' end of the citZ mRNA, decreasing its stability and thereby limiting the concentration of citrate synthase in the cell. Aconitase also binds to the gerE transcript late in sporulation and stabilizes it for translation, thereby increasing the rate and level of GerE protein accumulation. In Bacillus subtilis (strain 168), this protein is Aconitate hydratase A (citB).